A 420-amino-acid polypeptide reads, in one-letter code: MGNTITEKILASHCGKKVVEPGEFIEPKIDIALSNDVTAPLAVKEFRKTGIKKVFDKNKIALVMDHFTPNKDILSAEHVKFVREFAKEHKIKHYYEGGNVGVEHALLPEKGIVVPGDVIIGADSHTCTYGALGAFSTGGGSTDIAAAMATGKIWFKVPNSIKFILNRKLNKWVSGKDIILYIIGLIGVDGALYNSMEFDGPLCKKLTMADRFTITNMAIEAGGKNGIFTPDEITENYVAKRAQRKYKFYISDKDAKYLKIYEIDCSKILPQVSMPFLPSNTKAVKDIKKTYIDQVVIGSCTNGRIEDLRVAASIIKKGKKVNSNVRTLIIPATPEVYSQALDEGLLRIFMDAGAIISAPTCGPCLGGHMGILASGEKCASTTNRNFRGRMGHVESQLFLVNPAVAAASAIKGYIASPDEI.

3 residues coordinate [4Fe-4S] cluster: Cys-300, Cys-361, and Cys-364.

It belongs to the aconitase/IPM isomerase family. LeuC type 2 subfamily. In terms of assembly, heterodimer of LeuC and LeuD. It depends on [4Fe-4S] cluster as a cofactor.

The catalysed reaction is (2R,3S)-3-isopropylmalate = (2S)-2-isopropylmalate. It participates in amino-acid biosynthesis; L-leucine biosynthesis; L-leucine from 3-methyl-2-oxobutanoate: step 2/4. In terms of biological role, catalyzes the isomerization between 2-isopropylmalate and 3-isopropylmalate, via the formation of 2-isopropylmaleate. The sequence is that of 3-isopropylmalate dehydratase large subunit from Endomicrobium trichonymphae.